Here is a 567-residue protein sequence, read N- to C-terminus: Berberine bridge enzyme-like D-1 (567 aa).

Residues 1-33 (MKRNISMFLQLLLIILMMISFLFTSLLVPSVSA) form the signal peptide. Cys42 and Cys103 are disulfide-bonded. An N-linked (GlcNAc...) asparagine glycan is attached at Asn50. Residues 81 to 257 (SKPKPTVIIV…YAWKIRLLKV (177 aa)) form the FAD-binding PCMH-type domain. The residue at position 118 (His118) is a Pros-8alpha-FAD histidine. N-linked (GlcNAc...) asparagine glycans are attached at residues Asn364 and Asn378.

This sequence belongs to the oxygen-dependent FAD-linked oxidoreductase family. The cofactor is FAD. Mostly expressed in roots at low levels.

It localises to the vacuole. It functions in the pathway alkaloid biosynthesis; nicotine biosynthesis. In terms of biological role, involved in the biosynthesis of pyridine alkaloid natural products, leading mainly to the production of anabasine, anatabine, nicotine and nornicotine, effective deterrents against herbivores with antiparasitic and pesticide properties (neurotoxins); nornicotine serves as the precursor in the synthesis of the carcinogen compound N'-nitrosonornicotine (NNN). Catalyzes a late oxidation step subsequent to the pyridine ring condensation reaction in the biosynthesis of alkaloids. This Nicotiana tabacum (Common tobacco) protein is Berberine bridge enzyme-like D-1.